The chain runs to 483 residues: Proline--tRNA ligase (483 aa).

This sequence belongs to the class-II aminoacyl-tRNA synthetase family. ProS type 3 subfamily. In terms of assembly, homodimer.

The protein localises to the cytoplasm. The enzyme catalyses tRNA(Pro) + L-proline + ATP = L-prolyl-tRNA(Pro) + AMP + diphosphate. Catalyzes the attachment of proline to tRNA(Pro) in a two-step reaction: proline is first activated by ATP to form Pro-AMP and then transferred to the acceptor end of tRNA(Pro). This chain is Proline--tRNA ligase, found in Mycoplasma pneumoniae (strain ATCC 29342 / M129 / Subtype 1) (Mycoplasmoides pneumoniae).